The sequence spans 689 residues: uncharacterized protein (689 aa).

It localises to the mitochondrion. This is an uncharacterized protein from Schizosaccharomyces pombe (strain 972 / ATCC 24843) (Fission yeast).